The sequence spans 429 residues: Glutamate-1-semialdehyde 2,1-aminomutase (429 aa).

N6-(pyridoxal phosphate)lysine is present on K265.

It belongs to the class-III pyridoxal-phosphate-dependent aminotransferase family. HemL subfamily. In terms of assembly, homodimer. It depends on pyridoxal 5'-phosphate as a cofactor.

It localises to the cytoplasm. It carries out the reaction (S)-4-amino-5-oxopentanoate = 5-aminolevulinate. Its pathway is porphyrin-containing compound metabolism; protoporphyrin-IX biosynthesis; 5-aminolevulinate from L-glutamyl-tRNA(Glu): step 2/2. The polypeptide is Glutamate-1-semialdehyde 2,1-aminomutase (Shewanella pealeana (strain ATCC 700345 / ANG-SQ1)).